The chain runs to 403 residues: Fasciclin-like arabinogalactan protein 2 (403 aa).

Positions 1–26 are cleaved as a signal peptide; that stretch reads MAYLRRAATALVLIFQLHLFLSLSNA. FAS1 domains lie at 27-174 and 187-326; these read HNIT…SQVL and SDLI…DKVL. Residues asparagine 28, asparagine 130, asparagine 164, and asparagine 248 are each glycosylated (N-linked (GlcNAc...) asparagine). The segment at 338–371 is disordered; sequence SAPAPKSSKKKPKNAEADADGPSADAPSDDDVEV. Alanine 378 carries the GPI-anchor amidated alanine lipid modification. The propeptide at 379–403 is removed in mature form; sequence VSAMITRTSNVVTAIVGLCFGVWLM.

The protein belongs to the fasciclin-like AGP family. Expressed mainly in flowers and to a lesser extent in leaves and roots.

The protein resides in the cell membrane. In terms of biological role, may be a cell surface adhesion protein. The chain is Fasciclin-like arabinogalactan protein 2 (FLA2) from Arabidopsis thaliana (Mouse-ear cress).